A 157-amino-acid chain; its full sequence is MAPKADPARRVVADNRKARFHYEITDTVEAGIALTGTEVKSLRGGKATIGEAYAGPSGDEFFLFNAYIPEYLEANRFNHETKRPRRLLLHRRQINKFLGATQREGYTVIPLKIYFNERGRAKVELGLGRGKKLHDKRETAKERDWQRDKARLMRDKG.

The interval 133-157 (LHDKRETAKERDWQRDKARLMRDKG) is disordered. The span at 135–157 (DKRETAKERDWQRDKARLMRDKG) shows a compositional bias: basic and acidic residues.

The protein belongs to the SmpB family.

The protein resides in the cytoplasm. Its function is as follows. Required for rescue of stalled ribosomes mediated by trans-translation. Binds to transfer-messenger RNA (tmRNA), required for stable association of tmRNA with ribosomes. tmRNA and SmpB together mimic tRNA shape, replacing the anticodon stem-loop with SmpB. tmRNA is encoded by the ssrA gene; the 2 termini fold to resemble tRNA(Ala) and it encodes a 'tag peptide', a short internal open reading frame. During trans-translation Ala-aminoacylated tmRNA acts like a tRNA, entering the A-site of stalled ribosomes, displacing the stalled mRNA. The ribosome then switches to translate the ORF on the tmRNA; the nascent peptide is terminated with the 'tag peptide' encoded by the tmRNA and targeted for degradation. The ribosome is freed to recommence translation, which seems to be the essential function of trans-translation. The protein is SsrA-binding protein of Methylobacterium sp. (strain 4-46).